The primary structure comprises 117 residues: 3',5'-cyclic-AMP phosphodiesterase 4A (117 aa).

The segment at 42–79 (KQNEVEIPSPTMKDREPQEAPRQRPCQQLPPPVPHLQP) is disordered. Basic and acidic residues predominate over residues 53-63 (MKDREPQEAPR). The segment at 78 to 117 (QPMSQITGVKRLSHNSGLNNASIPRFGVKTDQEELLAQEL) is catalytic.

It belongs to the cyclic nucleotide phosphodiesterase family. PDE4 subfamily. As to quaternary structure, interacts with LYN (via SH3 domain). Interacts with ARRB2. It depends on Zn(2+) as a cofactor. Requires Mg(2+) as cofactor. Mn(2+) is required as a cofactor. Proteolytically cleaved by CASP3.

Its subcellular location is the cytoplasm. It is found in the cytosol. The protein localises to the membrane. The enzyme catalyses 3',5'-cyclic AMP + H2O = AMP + H(+). Its pathway is purine metabolism; 3',5'-cyclic AMP degradation; AMP from 3',5'-cyclic AMP: step 1/1. In terms of biological role, hydrolyzes the second messenger 3',5'-cyclic AMP (cAMP), which is a key regulator of many important physiological processes. The polypeptide is 3',5'-cyclic-AMP phosphodiesterase 4A (PDE4A) (Cavia porcellus (Guinea pig)).